A 101-amino-acid polypeptide reads, in one-letter code: Urease subunit beta (101 aa).

This sequence belongs to the urease beta subunit family. In terms of assembly, heterotrimer of UreA (gamma), UreB (beta) and UreC (alpha) subunits. Three heterotrimers associate to form the active enzyme.

The protein resides in the cytoplasm. It catalyses the reaction urea + 2 H2O + H(+) = hydrogencarbonate + 2 NH4(+). The protein operates within nitrogen metabolism; urea degradation; CO(2) and NH(3) from urea (urease route): step 1/1. This is Urease subunit beta from Burkholderia thailandensis (strain ATCC 700388 / DSM 13276 / CCUG 48851 / CIP 106301 / E264).